A 388-amino-acid chain; its full sequence is Reducing end xylose-releasing exo-oligoxylanase (388 aa).

The active-site Proton donor is the glutamate 70. The Proton acceptor role is filled by aspartate 263.

The protein belongs to the glycosyl hydrolase 8 (cellulase D) family.

It catalyses the reaction Hydrolysis of (1-&gt;4)-beta-D-xylose residues from the reducing end of oligosaccharides.. Its function is as follows. Hydrolyzes xylooligosaccharides with a degree of polymerization of greater than or equal to 3, releasing xylose from the reducing end. Only hydrolyzes the beta anomers of xylooligosaccharides, with inversion of anomeric configuration. Hydrolyzes the glucose and xylose-based trisaccharides where xylose is located at the -1 subsite, GXX, XXG and GXG. Does not hydrolyze xylan, chitosan, lichenan, curdlan or carboxymethylcellulose. This is Reducing end xylose-releasing exo-oligoxylanase from Halalkalibacterium halodurans (strain ATCC BAA-125 / DSM 18197 / FERM 7344 / JCM 9153 / C-125) (Bacillus halodurans).